Consider the following 489-residue polypeptide: N-succinylglutamate 5-semialdehyde dehydrogenase (489 aa).

216 to 221 (GSAATG) provides a ligand contact to NAD(+). Catalysis depends on residues glutamate 239 and cysteine 273.

Belongs to the aldehyde dehydrogenase family. AstD subfamily.

It catalyses the reaction N-succinyl-L-glutamate 5-semialdehyde + NAD(+) + H2O = N-succinyl-L-glutamate + NADH + 2 H(+). It functions in the pathway amino-acid degradation; L-arginine degradation via AST pathway; L-glutamate and succinate from L-arginine: step 4/5. Its function is as follows. Catalyzes the NAD-dependent reduction of succinylglutamate semialdehyde into succinylglutamate. This chain is N-succinylglutamate 5-semialdehyde dehydrogenase, found in Erwinia tasmaniensis (strain DSM 17950 / CFBP 7177 / CIP 109463 / NCPPB 4357 / Et1/99).